The sequence spans 528 residues: Probable GTP-binding protein OBGM, mitochondrial (528 aa).

A mitochondrion-targeting transit peptide spans 1–45; the sequence is MWRRQHALLRRISLPKPPAATGIGCYYATEPEGRKPKTAPLQSRG. In terms of domain architecture, Obg spans 46-339; it reads MVDRFRLRAK…TYLILELKSI (294 aa). Disordered regions lie at residues 52-87 and 167-212; these read LRAKGGDGGNGCISLRRSRSDRQGKPDGGNGGRGGD and HSPF…NHRG. A compositionally biased stretch (gly residues) spans 77 to 86; sequence PDGGNGGRGG. The segment covering 197 to 207 has biased composition (basic and acidic residues); sequence NTAENDCERGN. Positions 340-513 constitute an OBG-type G domain; sequence ADVGLVGMPN…LRVGLRDLMD (174 aa). GTP contacts are provided by residues 346–353 and 393–397; these read GMPNAGKS and DIPGL.

Belongs to the TRAFAC class OBG-HflX-like GTPase superfamily. OBG GTPase family.

The protein localises to the mitochondrion. May bind GTP and have GTPase activity. This is Probable GTP-binding protein OBGM, mitochondrial (OBGM) from Oryza sativa subsp. japonica (Rice).